Here is a 172-residue protein sequence, read N- to C-terminus: MAKIQPKVQGDERDDGLREKMIAVNRVTKVVKGGRILGFAALTVVGDGDGRIGMGKGKAKEVPVAVQKAMDEARRKMVKVPLKNGTLQHEVIGKHGAAKVLMAPAKEGTGVIAGGPMRAIFEVMGVTNIVTKSHGSTNPYNMVRATLDGLRKMSTPAEIAAKRGKSVEEILG.

The region spanning 17-80 is the S5 DRBM domain; that stretch reads LREKMIAVNR…DEARRKMVKV (64 aa).

The protein belongs to the universal ribosomal protein uS5 family. As to quaternary structure, part of the 30S ribosomal subunit. Contacts proteins S4 and S8.

In terms of biological role, with S4 and S12 plays an important role in translational accuracy. Located at the back of the 30S subunit body where it stabilizes the conformation of the head with respect to the body. The sequence is that of Small ribosomal subunit protein uS5 from Ralstonia nicotianae (strain ATCC BAA-1114 / GMI1000) (Ralstonia solanacearum).